The sequence spans 1195 residues: Error-prone DNA polymerase (1195 aa).

The segment at 1163–1195 is disordered; sequence ALNGDRRDTPDAPAQRHRHPRDVRILPPSRDFH.

The protein belongs to the DNA polymerase type-C family. DnaE2 subfamily.

The protein localises to the cytoplasm. It carries out the reaction DNA(n) + a 2'-deoxyribonucleoside 5'-triphosphate = DNA(n+1) + diphosphate. Its function is as follows. DNA polymerase involved in damage-induced mutagenesis and translesion synthesis (TLS). It is not the major replicative DNA polymerase. This chain is Error-prone DNA polymerase, found in Rhodopseudomonas palustris (strain ATCC BAA-98 / CGA009).